The following is a 705-amino-acid chain: Elongation factor G (705 aa).

Residues 8 to 290 enclose the tr-type G domain; sequence ERYRNFGIMA…GVVHLLPSPA (283 aa). GTP-binding positions include 17–24, 88–92, and 142–145; these read AHIDAGKT, DTPGH, and NKMD. The interval 290–309 is disordered; sequence ADRPPVQGIDEDEKEDTRAA.

Belongs to the TRAFAC class translation factor GTPase superfamily. Classic translation factor GTPase family. EF-G/EF-2 subfamily.

Its subcellular location is the cytoplasm. Catalyzes the GTP-dependent ribosomal translocation step during translation elongation. During this step, the ribosome changes from the pre-translocational (PRE) to the post-translocational (POST) state as the newly formed A-site-bound peptidyl-tRNA and P-site-bound deacylated tRNA move to the P and E sites, respectively. Catalyzes the coordinated movement of the two tRNA molecules, the mRNA and conformational changes in the ribosome. This Xanthomonas euvesicatoria pv. vesicatoria (strain 85-10) (Xanthomonas campestris pv. vesicatoria) protein is Elongation factor G.